A 454-amino-acid polypeptide reads, in one-letter code: Glutamine synthetase (454 aa).

The GS beta-grasp domain maps to 25–111; that stretch reads QGIDFLRLQF…LICDVVDREG (87 aa). One can recognise a GS catalytic domain in the interval 118 to 454; it reads PRQVLKNVLA…WETDRYLEKF (337 aa). Mg(2+) is bound by residues Glu141 and Glu143. Glu193 contributes to the ATP binding site. Positions 198 and 205 each coordinate Mg(2+). Residues 249 to 250 and Gly250 each bind L-glutamate; that span reads NG. Mg(2+) is bound at residue His254. ATP contacts are provided by residues 256 to 258 and Ser258; that span reads HIS. L-glutamate-binding residues include Arg308, Glu314, and Arg326. ATP is bound by residues Arg326 and Arg331. Glu343 contacts Mg(2+). Residue Arg345 participates in L-glutamate binding.

Belongs to the glutamine synthetase family. In terms of assembly, oligomer of 12 subunits arranged in the form of two hexagons. In its feedback-inhibited form, interacts with TnrA in order to block its DNA-binding activity. It depends on Mg(2+) as a cofactor.

It localises to the cytoplasm. The catalysed reaction is L-glutamate + NH4(+) + ATP = L-glutamine + ADP + phosphate + H(+). Its activity is regulated as follows. Inhibited by glutamine. Functionally, glutamine synthetase (GS) is an unusual multitasking protein that functions as an enzyme, a transcription coregulator, and a chaperone in ammonium assimilation and in the regulation of genes involved in nitrogen metabolism. It catalyzes the ATP-dependent biosynthesis of glutamine from glutamate and ammonia. Feedback-inhibited GlnA also interacts with and regulates the activity of the transcriptional regulator TnrA. During nitrogen limitation, TnrA is in its DNA-binding active state and turns on the transcription of genes required for nitrogen assimilation. Under conditions of nitrogen excess, feedback-inhibited GlnA forms a stable complex with TnrA, which inhibits its DNA-binding activity. In contrast, feedback-inhibited GlnA acts as a chaperone to stabilize the DNA-binding activity of GlnR, which represses the transcription of nitrogen assimilation genes. This chain is Glutamine synthetase, found in Halobacterium salinarum (strain ATCC 700922 / JCM 11081 / NRC-1) (Halobacterium halobium).